The following is a 202-amino-acid chain: Small ribosomal subunit protein uS2 (202 aa).

The protein belongs to the universal ribosomal protein uS2 family.

This is Small ribosomal subunit protein uS2 from Methanocorpusculum labreanum (strain ATCC 43576 / DSM 4855 / Z).